The primary structure comprises 128 residues: Large ribosomal subunit protein bL19 (128 aa).

Belongs to the bacterial ribosomal protein bL19 family.

This protein is located at the 30S-50S ribosomal subunit interface and may play a role in the structure and function of the aminoacyl-tRNA binding site. The polypeptide is Large ribosomal subunit protein bL19 (Herminiimonas arsenicoxydans).